The sequence spans 205 residues: Large ribosomal subunit protein uL3c (205 aa).

A disordered region spans residues 127-153 (HFSRGPMSHGSKNHRQPGSIGAGTTPG).

This sequence belongs to the universal ribosomal protein uL3 family. In terms of assembly, part of the 50S ribosomal subunit.

It localises to the plastid. The protein localises to the chloroplast. One of the primary rRNA binding proteins, it binds directly near the 3'-end of the 23S rRNA, where it nucleates assembly of the 50S subunit. The polypeptide is Large ribosomal subunit protein uL3c (rpl3) (Porphyra purpurea (Red seaweed)).